A 353-amino-acid polypeptide reads, in one-letter code: 4-hydroxy-3-methylbut-2-en-1-yl diphosphate synthase (flavodoxin) (353 aa).

[4Fe-4S] cluster is bound by residues Cys-265, Cys-268, Cys-300, and Glu-307.

It belongs to the IspG family. [4Fe-4S] cluster serves as cofactor.

The enzyme catalyses (2E)-4-hydroxy-3-methylbut-2-enyl diphosphate + oxidized [flavodoxin] + H2O + 2 H(+) = 2-C-methyl-D-erythritol 2,4-cyclic diphosphate + reduced [flavodoxin]. It participates in isoprenoid biosynthesis; isopentenyl diphosphate biosynthesis via DXP pathway; isopentenyl diphosphate from 1-deoxy-D-xylulose 5-phosphate: step 5/6. Converts 2C-methyl-D-erythritol 2,4-cyclodiphosphate (ME-2,4cPP) into 1-hydroxy-2-methyl-2-(E)-butenyl 4-diphosphate. The protein is 4-hydroxy-3-methylbut-2-en-1-yl diphosphate synthase (flavodoxin) of Sulfurihydrogenibium sp. (strain YO3AOP1).